The chain runs to 401 residues: Acetate kinase (401 aa).

N7 serves as a coordination point for Mg(2+). Residue K14 participates in ATP binding. Residue R90 participates in substrate binding. D147 functions as the Proton donor/acceptor in the catalytic mechanism. ATP contacts are provided by residues 207 to 211, 282 to 284, and 331 to 335; these read HMGNG, DMR, and GIGEN. E385 lines the Mg(2+) pocket.

Belongs to the acetokinase family. As to quaternary structure, homodimer. Mg(2+) is required as a cofactor. Requires Mn(2+) as cofactor.

Its subcellular location is the cytoplasm. The catalysed reaction is acetate + ATP = acetyl phosphate + ADP. Its pathway is metabolic intermediate biosynthesis; acetyl-CoA biosynthesis; acetyl-CoA from acetate: step 1/2. Functionally, catalyzes the formation of acetyl phosphate from acetate and ATP. Can also catalyze the reverse reaction. The protein is Acetate kinase of Clostridium acetobutylicum (strain ATCC 824 / DSM 792 / JCM 1419 / IAM 19013 / LMG 5710 / NBRC 13948 / NRRL B-527 / VKM B-1787 / 2291 / W).